The primary structure comprises 89 residues: Small ribosomal subunit protein uS15 (89 aa).

It belongs to the universal ribosomal protein uS15 family. Part of the 30S ribosomal subunit. Forms a bridge to the 50S subunit in the 70S ribosome, contacting the 23S rRNA.

Functionally, one of the primary rRNA binding proteins, it binds directly to 16S rRNA where it helps nucleate assembly of the platform of the 30S subunit by binding and bridging several RNA helices of the 16S rRNA. Forms an intersubunit bridge (bridge B4) with the 23S rRNA of the 50S subunit in the ribosome. This is Small ribosomal subunit protein uS15 from Streptococcus pyogenes serotype M2 (strain MGAS10270).